Consider the following 161-residue polypeptide: Allophycocyanin alpha chain (161 aa).

Asparagine 71 carries the N4-methylasparagine modification. Cysteine 81 is a binding site for (2R,3E)-phycocyanobilin.

The protein belongs to the phycobiliprotein family. As to quaternary structure, heterodimer of an alpha and a beta chain. Contains one covalently linked phycocyanobilin chromophore.

It is found in the plastid. Its subcellular location is the chloroplast thylakoid membrane. In terms of biological role, light-harvesting photosynthetic bile pigment-protein from the phycobiliprotein complex. Allophycocyanin has a maximum absorption at approximately 650 nanometers. This chain is Allophycocyanin alpha chain (apcA), found in Aglaothamnion neglectum (Red alga).